A 241-amino-acid chain; its full sequence is Lipopolysaccharide export system ATP-binding protein LptB (241 aa).

One can recognise an ABC transporter domain in the interval 4–237 (LTAKNLAKAY…EHVKRVYLGE (234 aa)). 36-43 (GPNGAGKT) is an ATP binding site.

This sequence belongs to the ABC transporter superfamily. Outer membrane lipopolysaccharide export (TC 1.B.42) family. Component of the lipopolysaccharide transport and assembly complex. The LptBFG transporter is composed of two ATP-binding proteins (LptB) and two transmembrane proteins (LptF and LptG).

Its subcellular location is the cytoplasm. It is found in the cell inner membrane. Functionally, part of the ABC transporter complex LptBFG involved in the translocation of lipopolysaccharide (LPS) from the inner membrane to the outer membrane. Probably responsible for energy coupling to the transport system. This is Lipopolysaccharide export system ATP-binding protein LptB (lptB) from Escherichia coli O157:H7.